A 518-amino-acid polypeptide reads, in one-letter code: Ankyrin repeat and SOCS box protein 3 (518 aa).

ANK repeat units lie at residues Asp-9–Val-38, Arg-42–Tyr-71, Glu-78–Ala-107, Glu-111–Gly-140, Cys-145–Cys-174, Phe-178–Cys-207, Asp-211–Leu-240, Ser-246–Asp-275, Asn-279–Ala-308, Gly-315–Glu-346, and His-348–Pro-373. Residues Met-441–Leu-504 enclose the SOCS box domain.

This sequence belongs to the ankyrin SOCS box (ASB) family. Interacts with ELOB and TNFRSF1B.

The protein resides in the cytoplasm. It participates in protein modification; protein ubiquitination. Its function is as follows. Probable substrate-recognition component of a SCF-like ECS (Elongin-Cullin-SOCS-box protein) E3 ubiquitin-protein ligase complex which mediates the ubiquitination and subsequent proteasomal degradation of target proteins. Recognizes TNFRSF1B. Plays a role in the down-regulation of antiviral innate immunity by targeting MAVS for ubiquitin-proteasomal degradation. Also destabilizes TRAF6 by enhancing its 'Lys-48'-linked polyubiquitination. The protein is Ankyrin repeat and SOCS box protein 3 (ASB3) of Homo sapiens (Human).